The following is a 296-amino-acid chain: Protoheme IX farnesyltransferase (296 aa).

The next 8 membrane-spanning stretches (helical) occupy residues 8–28, 35–55, 84–104, 107–127, 132–152, 162–182, 215–235, and 264–284; these read VTKP…FFLA, WILM…GCAI, AAFF…SYFT, VAVA…TMYF, VYGT…GYCA, AILL…IAIF, FAVV…FMVV, and VFFF…LDFN.

The protein belongs to the UbiA prenyltransferase family. Protoheme IX farnesyltransferase subfamily.

It is found in the cell inner membrane. It catalyses the reaction heme b + (2E,6E)-farnesyl diphosphate + H2O = Fe(II)-heme o + diphosphate. The protein operates within porphyrin-containing compound metabolism; heme O biosynthesis; heme O from protoheme: step 1/1. Functionally, converts heme B (protoheme IX) to heme O by substitution of the vinyl group on carbon 2 of heme B porphyrin ring with a hydroxyethyl farnesyl side group. This is Protoheme IX farnesyltransferase from Marinomonas sp. (strain MWYL1).